The primary structure comprises 1332 residues: DNA-directed RNA polymerase subunit beta'' (1332 aa).

Cys-220, Cys-291, Cys-298, and Cys-301 together coordinate Zn(2+).

It belongs to the RNA polymerase beta' chain family. RpoC2 subfamily. In terms of assembly, in plastids the minimal PEP RNA polymerase catalytic core is composed of four subunits: alpha, beta, beta', and beta''. When a (nuclear-encoded) sigma factor is associated with the core the holoenzyme is formed, which can initiate transcription. The cofactor is Zn(2+).

It localises to the plastid. It is found in the chloroplast. It carries out the reaction RNA(n) + a ribonucleoside 5'-triphosphate = RNA(n+1) + diphosphate. Its function is as follows. DNA-dependent RNA polymerase catalyzes the transcription of DNA into RNA using the four ribonucleoside triphosphates as substrates. The protein is DNA-directed RNA polymerase subunit beta'' of Lotus japonicus (Lotus corniculatus var. japonicus).